A 147-amino-acid polypeptide reads, in one-letter code: SsrA-binding protein (147 aa).

The tract at residues 124 to 147 (KKHDKRQDIKDRDWARKQARQDFS) is disordered. Basic and acidic residues predominate over residues 128-147 (KRQDIKDRDWARKQARQDFS).

This sequence belongs to the SmpB family.

The protein localises to the cytoplasm. Functionally, required for rescue of stalled ribosomes mediated by trans-translation. Binds to transfer-messenger RNA (tmRNA), required for stable association of tmRNA with ribosomes. tmRNA and SmpB together mimic tRNA shape, replacing the anticodon stem-loop with SmpB. tmRNA is encoded by the ssrA gene; the 2 termini fold to resemble tRNA(Ala) and it encodes a 'tag peptide', a short internal open reading frame. During trans-translation Ala-aminoacylated tmRNA acts like a tRNA, entering the A-site of stalled ribosomes, displacing the stalled mRNA. The ribosome then switches to translate the ORF on the tmRNA; the nascent peptide is terminated with the 'tag peptide' encoded by the tmRNA and targeted for degradation. The ribosome is freed to recommence translation, which seems to be the essential function of trans-translation. In Neorickettsia sennetsu (strain ATCC VR-367 / Miyayama) (Ehrlichia sennetsu), this protein is SsrA-binding protein.